A 607-amino-acid chain; its full sequence is CUB and zona pellucida-like domain-containing protein 1 (607 aa).

The first 19 residues, 1-19 (MEVTGRLFIWAILAVSCRA), serve as a signal peptide directing secretion. Over 20–568 (QLNSTAAEGR…AEISKQPLSH (549 aa)) the chain is Lumenal. The N-linked (GlcNAc...) asparagine glycan is linked to N22. Residues C32 and C58 are joined by a disulfide bond. 2 consecutive CUB domains span residues 32 to 146 (CTAS…YFFS) and 154 to 265 (CGGY…YAST). N-linked (GlcNAc...) asparagine glycosylation is present at N67. Intrachain disulfides connect C85–C107 and C154–C180. N195 carries an N-linked (GlcNAc...) asparagine glycan. C207 and C229 are oxidised to a cystine. Positions 276-519 (SCASDKMRVI…SRCNQGCVSR (244 aa)) constitute a ZP domain. Residue N419 is glycosylated (N-linked (GlcNAc...) asparagine). A disulfide bond links C442 and C498. The chain crosses the membrane as a helical span at residues 569-589 (LHLFSFMVLALNVVIVVTATV). The Cytoplasmic segment spans residues 590–607 (RHFLNRWKDHGYQKLQVY).

In terms of tissue distribution, expressed predominantly in epithelium of uterus and oviduct.

Its subcellular location is the zymogen granule membrane. Localized to zymogen granules, where it functions in trypsinogen activation. May indirectly regulate cell motility, cell-cell and cell/extracellular matrix interactions. This Rattus norvegicus (Rat) protein is CUB and zona pellucida-like domain-containing protein 1.